The chain runs to 152 residues: Endoribonuclease YbeY (152 aa).

Zn(2+)-binding residues include histidine 118, histidine 122, and histidine 128.

Belongs to the endoribonuclease YbeY family. Zn(2+) serves as cofactor.

The protein resides in the cytoplasm. In terms of biological role, single strand-specific metallo-endoribonuclease involved in late-stage 70S ribosome quality control and in maturation of the 3' terminus of the 16S rRNA. This is Endoribonuclease YbeY from Lacticaseibacillus paracasei (strain ATCC 334 / BCRC 17002 / CCUG 31169 / CIP 107868 / KCTC 3260 / NRRL B-441) (Lactobacillus paracasei).